Here is a 545-residue protein sequence, read N- to C-terminus: Glucose-6-phosphate isomerase (545 aa).

Glutamate 351 serves as the catalytic Proton donor. Residues histidine 382 and lysine 510 contribute to the active site.

Belongs to the GPI family.

It localises to the cytoplasm. It catalyses the reaction alpha-D-glucose 6-phosphate = beta-D-fructose 6-phosphate. Its pathway is carbohydrate biosynthesis; gluconeogenesis. The protein operates within carbohydrate degradation; glycolysis; D-glyceraldehyde 3-phosphate and glycerone phosphate from D-glucose: step 2/4. Functionally, catalyzes the reversible isomerization of glucose-6-phosphate to fructose-6-phosphate. This Shewanella loihica (strain ATCC BAA-1088 / PV-4) protein is Glucose-6-phosphate isomerase.